Consider the following 182-residue polypeptide: Putative minor fimbrial subunit PmfF (182 aa).

Residues 1–22 (MKNSIIKSAITCLLLLSPSTFA) form the signal peptide.

Belongs to the fimbrial protein family.

It is found in the fimbrium. The sequence is that of Putative minor fimbrial subunit PmfF (pmfF) from Proteus mirabilis (strain HI4320).